The sequence spans 319 residues: Bidirectional sugar transporter SWEET15 (319 aa).

Over 1 to 10 the chain is Extracellular; that stretch reads MAFMSMERST. Residues 11–31 form a helical membrane-spanning segment; that stretch reads WAFTFGILGNLISLMVFLSPL. Positions 13–99 constitute a MtN3/slv 1 domain; it reads FTFGILGNLI…AMYLAYAPKS (87 aa). At 32–50 the chain is on the cytoplasmic side; the sequence is PTFYRVYRKKSTEGFQSTP. Residues 51–71 traverse the membrane as a helical segment; sequence YVVTLFSCMLWMYYAFVKSGA. E72 is a topological domain (extracellular). A helical membrane pass occupies residues 73–93; sequence LLVTINGVGCVIETVYLAMYL. Topologically, residues 94-106 are cytoplasmic; the sequence is AYAPKSARMLTAK. Residues 107–127 traverse the membrane as a helical segment; sequence MLLGLNIGLFGVIALVTLLLS. Topologically, residues 128-134 are extracellular; the sequence is RGELRVH. The chain crosses the membrane as a helical span at residues 135–155; that stretch reads VLGWICVAVSLSVFAAPLSII. A MtN3/slv 2 domain is found at 135–219; sequence VLGWICVAVS…ALYMAYRSKK (85 aa). The Cytoplasmic segment spans residues 156–167; it reads RLVIRTKSVEFM. A helical transmembrane segment spans residues 168 to 188; it reads PFSLSFFLVLSAVIWFLYGLL. Topologically, residues 189–191 are extracellular; it reads KKD. Residues 192–212 traverse the membrane as a helical segment; the sequence is VFVALPNVLGFVFGVAQMALY. Over 213–319 the chain is Cytoplasmic; the sequence is MAYRSKKPLV…KPDMAIVVEV (107 aa).

This sequence belongs to the SWEET sugar transporter family. In terms of assembly, forms homooligomers and/or heterooligomers.

Its subcellular location is the cell membrane. Functionally, mediates both low-affinity uptake and efflux of sugar across the plasma membrane. In terms of biological role, confers blight susceptibility. Confers TAL effector-mediated susceptibility to Xanthomonas oryzae pv. oryzae. The polypeptide is Bidirectional sugar transporter SWEET15 (SWEET15) (Oryza sativa subsp. japonica (Rice)).